The primary structure comprises 142 residues: MAEQKKKVSPRRRARECAVQALYSWAVSNNDATEIELSFITEQDMKGVDTPYFRKLFRNTVTYLESVDVTIAPFLDRTSEELTPIEKAVLRLATYELKYEPDVPYKVAINEAIELAKTFGAEDSHKYINGVLDKIAPALGRK.

It belongs to the NusB family.

Functionally, involved in transcription antitermination. Required for transcription of ribosomal RNA (rRNA) genes. Binds specifically to the boxA antiterminator sequence of the ribosomal RNA (rrn) operons. The protein is Transcription antitermination protein NusB of Actinobacillus succinogenes (strain ATCC 55618 / DSM 22257 / CCUG 43843 / 130Z).